A 241-amino-acid chain; its full sequence is 1-(5-phosphoribosyl)-5-[(5-phosphoribosylamino)methylideneamino] imidazole-4-carboxamide isomerase (241 aa).

The Proton acceptor role is filled by D8. D129 functions as the Proton donor in the catalytic mechanism.

It belongs to the HisA/HisF family.

It is found in the cytoplasm. The enzyme catalyses 1-(5-phospho-beta-D-ribosyl)-5-[(5-phospho-beta-D-ribosylamino)methylideneamino]imidazole-4-carboxamide = 5-[(5-phospho-1-deoxy-D-ribulos-1-ylimino)methylamino]-1-(5-phospho-beta-D-ribosyl)imidazole-4-carboxamide. It participates in amino-acid biosynthesis; L-histidine biosynthesis; L-histidine from 5-phospho-alpha-D-ribose 1-diphosphate: step 4/9. This chain is 1-(5-phosphoribosyl)-5-[(5-phosphoribosylamino)methylideneamino] imidazole-4-carboxamide isomerase, found in Chloroflexus aggregans (strain MD-66 / DSM 9485).